The following is a 120-amino-acid chain: MVALNTLSAVSAALLVLAASPSPASARSLDASPSSAFSGNHSLSKRSLFDPACTGIYDRQLLGKLGRLCDDCYNVFREPKVATGCRSNCYYNLIFLDCLEYLIPSHLQEEHMEALQTVGK.

Positions 1 to 26 (MVALNTLSAVSAALLVLAASPSPASA) are cleaved as a signal peptide. Disulfide bonds link Cys-53-Cys-89, Cys-69-Cys-85, and Cys-72-Cys-98. Val-118 carries the valine amide modification.

The protein belongs to the arthropod CHH/MIH/GIH/VIH hormone family.

It localises to the secreted. Its function is as follows. Hormone found in the sinus gland of isopods and decapods which controls the blood sugar level. Has a secretagogue action over the amylase released from the midgut gland. May act as a stress hormone and may be involved in the control of molting and reproduction. The sequence is that of Crustacean hyperglycemic hormones 4 (CHH4) from Penaeus monodon (Giant tiger prawn).